The sequence spans 2850 residues: Mucin-6 (2850 aa).

The N-terminal stretch at 1 to 22 (MLRVRQLLLLLLFRGPLIDAGA) is a signal peptide. The VWFD 1 domain occupies 43-256 (GWCSTWGAGH…KLDDPNEICA (214 aa)). 2 disulfide bridges follow: Cys45-Cys218 and Cys67-Cys255. N-linked (GlcNAc...) asparagine glycosylation occurs at Asn94. The interval 160–183 (HLTEGQGGDEVGTPGTLKQESKGS) is disordered. Asn310 is a glycosylation site (N-linked (GlcNAc...) asparagine). Residues 344–399 (CPANQVYQECGEVCIKTCSNPQHSCSSPCTFGCFCPHGTLLDDISGNQSCVPVNQC) enclose the TIL 1 domain. Residues 437 to 621 (GHCSLEGGSF…ALEREMDPCS (185 aa)) enclose the VWFD 2 domain. Disulfide bonds link Cys439–Cys575 and Cys461–Cys620. 2 N-linked (GlcNAc...) asparagine glycosylation sites follow: Asn528 and Asn701. Positions 806–869 (CPEPKTFQSC…DGQCVPAEEC (64 aa)) constitute a TIL 2 domain. The 173-residue stretch at 908–1080 (STCVLYGEGH…NSWKESPLCG (173 aa)) folds into the VWFD 3 domain. 4 cysteine pairs are disulfide-bonded: Cys910-Cys1044, Cys932-Cys1079, Cys941-Cys1041, and Cys959-Cys966. Asn1017 and Asn1221 each carry an N-linked (GlcNAc...) asparagine glycan. Residues 1263–1281 (EFHSSTSANTPVAPSYLPG) are compositionally biased toward low complexity. Disordered regions lie at residues 1263 to 1363 (EFHS…TAEL), 1377 to 1400 (GMST…THRV), 1466 to 1504 (VSAN…PSTT), 1580 to 1600 (TPPV…RTTH), 1626 to 1650 (IASP…TSSV), 1705 to 1813 (TKTS…SLST), 1877 to 1942 (QTKS…RTTH), 1968 to 1992 (IASP…TSSV), 2049 to 2119 (TSFS…PSTT), 2219 to 2254 (QTKS…TTNS), 2276 to 2295 (IAHT…SSTT), 2306 to 2338 (EQST…SPTD), 2370 to 2473 (TTPP…FRTP), 2511 to 2621 (PTNP…TFVS), 2634 to 2674 (PTIH…KSTT), and 2692 to 2761 (STMG…GTCS). Polar residues predominate over residues 1294 to 1312 (EELTVWTTPKESTVSSGEY). The segment covering 1345–1363 (TSKPTASSLSSSTKTTAEL) has biased composition (low complexity). 2 stretches are compositionally biased toward polar residues: residues 1378-1399 (MSTS…TTHR) and 1466-1484 (VSAN…PVVH). Repeat copies occupy residues 1440 to 1555 (TQNL…PTTE), 1556 to 1712 (GLNT…FSTD), 1713 to 1885 (RTST…FSTD), 1886 to 2054 (RTSA…FSTD), 2055 to 2227 (RTST…FSTD), 2228 to 2396 (RTST…FSTE), 2397 to 2563 (RTST…FPTT), and 2564 to 2671 (RTST…FSSK). The interval 1440-2671 (TQNLFSTAPH…VPTFSSFSSK (1232 aa)) is approximate repeats. Over residues 1485 to 1504 (TTSGTSSSPQTPRTTHPSTT) the composition is skewed to low complexity. The segment covering 1626–1639 (IASPTPSAPQTSLA) has biased composition (polar residues). Residues 1705–1719 (TKTSFSTDRTSTSTS) show a composition bias toward low complexity. Polar residues predominate over residues 1720–1757 (APHLSETSAVTAHQSTPTAVSANSIKPTMSSTGTPVVH). The span at 1758–1777 (TTSGTTSSPQTPRTTHPSTT) shows a compositional bias: low complexity. Residues 1778–1813 (VAVSGTVHTTGLPSGTSVHTTTNFPTHSGPQSSLST) show a composition bias toward polar residues. Residues 1893–1942 (SQPSTVTPTQSTPIPATTNSLMTTGGLTGTPPVHTTSGTTSSPQTPRTTH) are compositionally biased toward low complexity. Polar residues predominate over residues 1968 to 1981 (IASPTPSAPQTSLA). Over residues 2049–2061 (TSFSTDRTSTSTS) the composition is skewed to low complexity. Residues 2062–2099 (APHLSETSAVTAHQSTPTAVSANSIKPTMSSTGTPVVH) are compositionally biased toward polar residues. The segment covering 2100–2119 (TTSGTTSSPQTPRTTHPSTT) has biased composition (low complexity). The segment covering 2227-2238 (DRTSTPHLSQSS) has biased composition (polar residues). The segment covering 2282 to 2295 (TTHSLPTAASSSTT) has biased composition (low complexity). Residues 2370–2384 (TTPPNTSTPVTHSTS) are compositionally biased toward low complexity. Residues 2385-2429 (ATTEAQGSFSTERTSTSYLSHPSSTTVHQSTAGPVITSIKSTMGV) are compositionally biased toward polar residues. A compositionally biased stretch (low complexity) spans 2436 to 2456 (HTTSGTTSSPQTPHSTHPIST). Residues 2457–2466 (AAISRTTGIS) are compositionally biased toward polar residues. Low complexity predominate over residues 2516-2533 (SVSSASTSRPLSTSLPTT). Polar residues predominate over residues 2534 to 2560 (IKGTGTPQTPVSDINTTSATTQAHSSF). Low complexity predominate over residues 2561–2584 (PTTRTSTSHLSLPSSMTSTLTPAS). The segment covering 2585–2601 (RSASTLQYTPTPSSVSH) has biased composition (polar residues). Residues 2639–2674 (TPTPSSRPTSSTGLLSTSKTTSHVPTFSSFSSKSTT) show a composition bias toward low complexity. Positions 2692 to 2725 (STMGMTNLPSSGSPDINHTTRPPGSSPLPTSAFL) are enriched in polar residues. Over residues 2726–2759 (SRSTSPTGSSSPSTPVSSSNPDSSVSSPPSHPGT) the composition is skewed to low complexity. Disulfide bonds link Cys2760–Cys2807, Cys2774–Cys2821, Cys2783–Cys2841, and Cys2787–Cys2843. Residues 2760–2849 (CSLQEEEHQI…SCVCSPLQCK (90 aa)) form the CTCK domain.

In terms of assembly, multimer; disulfide-linked. Post-translationally, O-glycosylated. As to expression, expressed in stomach, duodenum and small intestine.

Its subcellular location is the secreted. In terms of biological role, may provide a mechanism for modulation of the composition of the protective mucus layer related to acid secretion or the presence of bacteria and noxious agents in the lumen. Plays an important role in the cytoprotection of epithelial surfaces and are used as tumor markers in a variety of cancers. May play a role in epithelial organogenesis. This is Mucin-6 (Muc6) from Mus musculus (Mouse).